Here is a 246-residue protein sequence, read N- to C-terminus: Sulfate transporter CysZ (246 aa).

Helical transmembrane passes span 24-44 (LFVLIPLSINLLVFALLIGFA), 69-89 (IVWPLFVLLVLVIVFFTFTMV), 148-168 (LLVLSFVPGVNLVATPLWILF), and 214-234 (LLIPLVNLVMMPAAVAGATLF).

It belongs to the CysZ family.

It is found in the cell inner membrane. Functionally, high affinity, high specificity proton-dependent sulfate transporter, which mediates sulfate uptake. Provides the sulfur source for the cysteine synthesis pathway. This chain is Sulfate transporter CysZ, found in Pseudomonas paraeruginosa (strain DSM 24068 / PA7) (Pseudomonas aeruginosa (strain PA7)).